Consider the following 593-residue polypeptide: NADH-quinone oxidoreductase subunit C/D (593 aa).

An NADH dehydrogenase I subunit C region spans residues 1–184; the sequence is MTADSVLSIP…DPYSLSAAKQ (184 aa). Residues 208 to 593 form an NADH dehydrogenase I subunit D region; sequence DFMFLNLGPN…IDFVMADVDR (386 aa).

In the N-terminal section; belongs to the complex I 30 kDa subunit family. It in the C-terminal section; belongs to the complex I 49 kDa subunit family. As to quaternary structure, NDH-1 is composed of 13 different subunits. Subunits NuoB, CD, E, F, and G constitute the peripheral sector of the complex.

Its subcellular location is the cell inner membrane. It carries out the reaction a quinone + NADH + 5 H(+)(in) = a quinol + NAD(+) + 4 H(+)(out). NDH-1 shuttles electrons from NADH, via FMN and iron-sulfur (Fe-S) centers, to quinones in the respiratory chain. The immediate electron acceptor for the enzyme in this species is believed to be ubiquinone. Couples the redox reaction to proton translocation (for every two electrons transferred, four hydrogen ions are translocated across the cytoplasmic membrane), and thus conserves the redox energy in a proton gradient. The polypeptide is NADH-quinone oxidoreductase subunit C/D (Azotobacter vinelandii (strain DJ / ATCC BAA-1303)).